We begin with the raw amino-acid sequence, 387 residues long: 3-ketoacyl-CoA thiolase (387 aa).

Cysteine 91 functions as the Acyl-thioester intermediate in the catalytic mechanism. Catalysis depends on proton acceptor residues histidine 343 and cysteine 373.

The protein belongs to the thiolase-like superfamily. Thiolase family. Heterotetramer of two alpha chains (FadB) and two beta chains (FadA).

Its subcellular location is the cytoplasm. The catalysed reaction is an acyl-CoA + acetyl-CoA = a 3-oxoacyl-CoA + CoA. It participates in lipid metabolism; fatty acid beta-oxidation. In terms of biological role, catalyzes the final step of fatty acid oxidation in which acetyl-CoA is released and the CoA ester of a fatty acid two carbons shorter is formed. This chain is 3-ketoacyl-CoA thiolase, found in Shigella dysenteriae serotype 1 (strain Sd197).